Here is a 142-residue protein sequence, read N- to C-terminus: MFIGEYQHALDPKNRIIVPAKLRDGLGNKFVITKGLDGCLYAYPLDEWRILEDKLKTLPLTNKDARSFVRFFFSGACEVELDKQGRGLIPQNLKEYAGIEKDIVSIGVLSRVEIWSKEKWSEYNESNIDFDSIAEKMNDLGI.

2 consecutive SpoVT-AbrB domains span residues 5 to 47 and 76 to 119; these read EYQH…PLDE and ACEV…SKEK.

Belongs to the MraZ family. Forms oligomers.

It is found in the cytoplasm. It localises to the nucleoid. The polypeptide is Transcriptional regulator MraZ (Clostridium beijerinckii (strain ATCC 51743 / NCIMB 8052) (Clostridium acetobutylicum)).